Consider the following 148-residue polypeptide: Wound-induced proteinase inhibitor 2 (148 aa).

The signal sequence occupies residues 1-25 (MAVHKEVNFVAYLLIVLGMFLYVDA). Residues 26 to 81 (KACTRECGNLGFGICPRSEGSPLNPICINCCSGYKGCNYYNSFGKFICEGESDPKR) form a 1; trypsin-inhibitory repeat. 8 cysteine pairs are disulfide-bonded: Cys-28–Cys-116, Cys-32–Cys-112, Cys-40–Cys-122, Cys-52–Cys-89, Cys-55–Cys-73, Cys-56–Cys-85, Cys-62–Cys-98, and Cys-115–Cys-133. One copy of the 2; chymotrypsin-inhibitory repeat lies at 83 to 141 (NACTFNCDPNIAYSRCPRSQGKSLIYPTGCTTCCTGYKGCYYFGKDGKFVCEGESDEPK).

It belongs to the protease inhibitor I20 (potato type II proteinase inhibitor) family.

It localises to the secreted. Potent inhibitor of both trypsin and chymotrypsin. The sequence is that of Wound-induced proteinase inhibitor 2 from Solanum lycopersicum (Tomato).